The chain runs to 564 residues: Proline--tRNA ligase (564 aa).

The protein belongs to the class-II aminoacyl-tRNA synthetase family. ProS type 1 subfamily. Homodimer.

It is found in the cytoplasm. The enzyme catalyses tRNA(Pro) + L-proline + ATP = L-prolyl-tRNA(Pro) + AMP + diphosphate. Its function is as follows. Catalyzes the attachment of proline to tRNA(Pro) in a two-step reaction: proline is first activated by ATP to form Pro-AMP and then transferred to the acceptor end of tRNA(Pro). As ProRS can inadvertently accommodate and process non-cognate amino acids such as alanine and cysteine, to avoid such errors it has two additional distinct editing activities against alanine. One activity is designated as 'pretransfer' editing and involves the tRNA(Pro)-independent hydrolysis of activated Ala-AMP. The other activity is designated 'posttransfer' editing and involves deacylation of mischarged Ala-tRNA(Pro). The misacylated Cys-tRNA(Pro) is not edited by ProRS. In Thermosipho melanesiensis (strain DSM 12029 / CIP 104789 / BI429), this protein is Proline--tRNA ligase.